An 832-amino-acid chain; its full sequence is Protein monoglycylase TTLL8 (832 aa).

The span at 1 to 13 (MSCPPTPNPPFRP) shows a compositional bias: pro residues. Disordered stretches follow at residues 1-84 (MSCP…QDLS) and 277-304 (GKSK…KLPS). Basic and acidic residues-rich tracts occupy residues 46-59 (QLRE…ERKK), 66-75 (DGDHKEENKL), and 280-299 (KKEE…ENPD). Residues 271 to 624 (YCSKVKGKSK…RKLDRNCDIG (354 aa)) enclose the TTL domain. ATP-binding positions include Lys397, 403-404 (RG), 435-438 (QKYI), 448-450 (KFD), and 492-493 (CN). Arg403 serves as a coordination point for a protein. Ser495 is an L-glutamate binding site. Mg(2+) is bound by residues Asp570, Glu583, and Asn585. Residue Glu583 coordinates ATP.

The cofactor is Mg(2+). In terms of tissue distribution, highly expressed in testis. Expressed in brain, heart, kidney, liver, lung, muscle, spleen and trachea. Expressed in sperm flagellum. In the brain, specifically expressed in ependymal cilia.

It is found in the cytoplasm. The protein localises to the cytoskeleton. Its subcellular location is the cell projection. The protein resides in the cilium. It localises to the cilium axoneme. It is found in the flagellum axoneme. It carries out the reaction L-glutamyl-[protein] + glycine + ATP = glycyl-L-glutamyl-[protein] + ADP + phosphate + H(+). In terms of biological role, monoglycylase which modifies both tubulin and non-tubulin proteins, adding a single glycine on the gamma-carboxyl groups of specific glutamate residues to generate monoglycine side chains within the C-terminal tail of target proteins. Not involved in elongation step of the polyglycylation reaction. Preferentially monoglycylates alpha-tubulin over beta-tubulin. Together with TTLL3, mediates microtubule glycylation of primary and motile cilia, which is essential for their stability and maintenance. Together with TTLL3, glycylates sperm flagella which regulates axonemal dynein motor activity, thereby controlling flagellar beat, directional sperm swimming and male fertility. Monoglycylates non-tubulin proteins such as ANP32A, ANP32B, SET, NCL and NAP1. The chain is Protein monoglycylase TTLL8 from Mus musculus (Mouse).